A 666-amino-acid chain; its full sequence is DNA ligase (666 aa).

Residues 34–38 (DEEYD), 83–84 (SL), and glutamate 114 each bind NAD(+). Lysine 116 serves as the catalytic N6-AMP-lysine intermediate. Positions 137, 174, 290, and 314 each coordinate NAD(+). Residues cysteine 408, cysteine 411, cysteine 424, and cysteine 429 each contribute to the Zn(2+) site. One can recognise a BRCT domain in the interval 584–666 (SIEGPLKGLT…LKMVKREHNG (83 aa)).

Belongs to the NAD-dependent DNA ligase family. LigA subfamily. Mg(2+) is required as a cofactor. It depends on Mn(2+) as a cofactor.

The catalysed reaction is NAD(+) + (deoxyribonucleotide)n-3'-hydroxyl + 5'-phospho-(deoxyribonucleotide)m = (deoxyribonucleotide)n+m + AMP + beta-nicotinamide D-nucleotide.. Its function is as follows. DNA ligase that catalyzes the formation of phosphodiester linkages between 5'-phosphoryl and 3'-hydroxyl groups in double-stranded DNA using NAD as a coenzyme and as the energy source for the reaction. It is essential for DNA replication and repair of damaged DNA. This chain is DNA ligase, found in Coprothermobacter proteolyticus (strain ATCC 35245 / DSM 5265 / OCM 4 / BT).